Reading from the N-terminus, the 261-residue chain is Putative phosphite transport system permease protein HtxE (261 aa).

The 207-residue stretch at 47–253 folds into the ABC transmembrane type-1 domain; that stretch reads EATTETVEVL…VFVFVLDQLQ (207 aa). The next 3 helical transmembrane spans lie at 122 to 142, 203 to 220, and 229 to 249; these read LIVALFLVLAYGFGPIAGVLA, RNLRMATVIGLVGAGGIG, and MFQYGHVMTILIAIFVFVFVL.

This sequence belongs to the binding-protein-dependent transport system permease family.

Its subcellular location is the cell inner membrane. In terms of biological role, probably forms part of a binding-protein-dependent hypophosphite transporter. The chain is Putative phosphite transport system permease protein HtxE (htxE) from Stutzerimonas stutzeri (Pseudomonas stutzeri).